The following is a 205-amino-acid chain: MKINTAEFIISNSIVSLCPQEHLPEYAFIGRSNVGKSSLINMLTNHKSLAKTSGRPGKTQLINHFKINNNWFLVDLPGYGYAKVSKKTKEVFQQFITDYFEKREQLVCAFVLIDIRHEAQKIDLEFITYLGEIELPFCIVFTKADKISKGKVAQHVAAYRTALLKNNWEEMPHHFVTSATEHTGKESLLSYIDEVNQDIFKQNGF.

The EngB-type G domain occupies His22–Asp198. Residues Gly30–Ser37, Gly57–Leu61, Asp75–Gly78, Thr142–Asp145, and Thr177–Ala179 contribute to the GTP site. Mg(2+)-binding residues include Ser37 and Thr59.

The protein belongs to the TRAFAC class TrmE-Era-EngA-EngB-Septin-like GTPase superfamily. EngB GTPase family. The cofactor is Mg(2+).

Necessary for normal cell division and for the maintenance of normal septation. The polypeptide is Probable GTP-binding protein EngB (Flavobacterium psychrophilum (strain ATCC 49511 / DSM 21280 / CIP 103535 / JIP02/86)).